Here is a 244-residue protein sequence, read N- to C-terminus: 5-oxoprolinase subunit A (244 aa).

This sequence belongs to the LamB/PxpA family. Forms a complex composed of PxpA, PxpB and PxpC.

The enzyme catalyses 5-oxo-L-proline + ATP + 2 H2O = L-glutamate + ADP + phosphate + H(+). In terms of biological role, catalyzes the cleavage of 5-oxoproline to form L-glutamate coupled to the hydrolysis of ATP to ADP and inorganic phosphate. The protein is 5-oxoprolinase subunit A of Citrobacter koseri (strain ATCC BAA-895 / CDC 4225-83 / SGSC4696).